Reading from the N-terminus, the 345-residue chain is Histone H3-like centromeric protein cpar-1 (345 aa).

The interval 117 to 246 (NHSNRKPLEE…SRVTKTHNRK (130 aa)) is disordered. The segment covering 122–149 (KPLEESRRREEPRDRVHESNIDITHRGD) has biased composition (basic and acidic residues). Residues 233–246 (RSGKSRVTKTHNRK) are compositionally biased toward basic residues. Residues 263–340 (STDMLIQKAP…TDIQLYRRLC (78 aa)) form an H3-like region.

The protein belongs to the histone H3 family. Forms a nucleosome-like histone octamer containing two molecules each of H2A, H2B, cpar-1 and H4 assembled in one cpar-1-H4 heterotetramer and two H2A-H2B heterodimers. In terms of processing, cleaved at the onset of meiotic anaphase I, likely by separase sep-1.

Its subcellular location is the nucleus. It is found in the chromosome. Its function is as follows. Histone H3-like variant which exclusively replaces conventional H3 in the nucleosome core of centromeric chromatin at the inner plate of the kinetochore. Required for recruitment and assembly of kinetochore proteins, mitotic progression and chromosome segregation. May serve as an epigenetic mark that propagates centromere identity through replication and cell division. Not required for chromosome segregation during meiosis. The polypeptide is Histone H3-like centromeric protein cpar-1 (Caenorhabditis briggsae).